A 399-amino-acid polypeptide reads, in one-letter code: MDSSYWENLLLTINRFLGVYPSGRVGVLRWLHTLWSLFLLMYIWTGSIVKCLEFTVEIPTIEKLLYLMEFPGNMATIAILVYYAVLNRPLAHGAELQIERIITGLKGKAKRLVYKRHGQRTLHLMATTLVFHGLCVLVDVVNYDFEFWTTWSSNSVYNLPGLMMSLGVLQYAQPVHFLWLVMDQMRMCLKELKLLQRPPQGSTKLDACYESAFAVLVDAGGGSALMIEEMRYTCNLIEQVHSQFLLRFGLYLVLNLLNSLVSICVELYLIFNFFETPLWEESVLLVYRLLWLAMHGGRIWFILSVNEQILEQKCNLCQLLNELEVCSSRLQRTINRFLLQLQRSIDQPLEACGIVTLDTRSLGGFIGVLMAIVIFLIQIGLGNKSLMGVALNRSNWVYV.

The Cytoplasmic portion of the chain corresponds to methionine 1–threonine 33. A helical transmembrane segment spans residues leucine 34 to phenylalanine 54. Over threonine 55–leucine 65 the chain is Extracellular. A helical transmembrane segment spans residues tyrosine 66–leucine 86. The Cytoplasmic segment spans residues asparagine 87 to arginine 120. Residues threonine 121–valine 141 form a helical membrane-spanning segment. The Extracellular portion of the chain corresponds to asparagine 142–aspartate 206. The helical transmembrane segment at alanine 207–isoleucine 227 threads the bilayer. Over glutamate 228–leucine 250 the chain is Cytoplasmic. The chain crosses the membrane as a helical span at residues tyrosine 251–phenylalanine 271. At asparagine 272 to serine 282 the chain is on the extracellular side. The helical transmembrane segment at valine 283–leucine 303 threads the bilayer. Over serine 304–serine 361 the chain is Cytoplasmic. Residues leucine 362 to glycine 382 form a helical membrane-spanning segment. Residues asparagine 383 and asparagine 392 are each glycosylated (N-linked (GlcNAc...) asparagine). Topologically, residues asparagine 383–valine 399 are extracellular.

It belongs to the insect chemoreceptor superfamily. Gustatory receptor (GR) family. Gr10a subfamily. As to expression, expressed in the adult labellar chemosensory neurons. In larvae, is expressed in neurons of the terminal external chemosensory organ.

The protein localises to the cell membrane. Probable gustatory receptor which mediates acceptance or avoidance behavior, depending on its substrates. This is Putative gustatory receptor 59e (Gr59e) from Drosophila melanogaster (Fruit fly).